A 1001-amino-acid polypeptide reads, in one-letter code: Phosphatidylinositol 4,5-bisphosphate 5-phosphatase A (1001 aa).

Residues 1-12 show a composition bias toward polar residues; the sequence is MEGQSRSGSAKS. Disordered stretches follow at residues 1–130 and 144–412; these read MEGQ…VASV and SASA…QPTC. Positions 6 to 11 match the RSXSXX motif 1 motif; it reads RSGSAK. Residues 13–28 show a composition bias toward low complexity; it reads GTRTGLGPLPGTHGAL. The segment covering 29–42 has biased composition (polar residues); it reads QTGTPSKKVNSSFQ. Residue arginine 56 is modified to Asymmetric dimethylarginine; alternate. At arginine 56 the chain carries Omega-N-methylarginine; alternate. At arginine 65 the chain carries Omega-N-methylarginine. Asymmetric dimethylarginine is present on arginine 76. Asymmetric dimethylarginine; alternate is present on arginine 83. Arginine 83 bears the Omega-N-methylarginine; alternate mark. Positions 161-174 are enriched in polar residues; it reads SPTSRDQKQLSPTS. Serine 171 is modified (phosphoserine). Residues 180–196 show a composition bias toward low complexity; it reads ALATSGLSLALASQEQP. A compositionally biased stretch (pro residues) spans 197–210; sequence PQSPSSPSPVPSPV. Over residues 284 to 294 the composition is skewed to basic and acidic residues; it reads ARPEAPRHSPE. Phosphoserine occurs at positions 292 and 325. Pro residues predominate over residues 338-348; the sequence is VPPPLPKPPRS. Positions 346-351 match the SH3-binding motif; the sequence is PRSPSR. 2 stretches are compositionally biased toward low complexity: residues 349 to 361 and 394 to 411; these read PSRSPSRSPNRSP and SPVATATSPTSSWSAQPT. The RSXSXX motif 2 motif lies at 351-356; the sequence is RSPSRS. Residues 420–723 are catalytic; the sequence is ITVVTWNVGT…SDHKPVAARF (304 aa). Residues 724 to 835 form a required for ruffle localization region; it reads LLQFAFRDDV…IGVTEPFQIS (112 aa). Residues 837 to 1001 are disordered; the sequence is PTSESASSST…LGLEDGGLGP (165 aa). The span at 838 to 853 shows a compositional bias: low complexity; sequence TSESASSSTDSSGTSS. Short sequence motifs (RSXSXX motif) lie at residues 869–874 and 880–885; these read RSPSPG and RSRSPG. Phosphoserine is present on serine 898. Low complexity-rich tracts occupy residues 905-917 and 925-936; these read SRSPSPQSRQLPR and SSGSRGSSEEGP. The short motif at 906–911 is the RSXSXX motif 5 element; it reads RSPSPQ. Residues 937 to 949 show a composition bias toward pro residues; the sequence is SGPPGPWAFPPAV. Serine 985 bears the Phosphoserine mark.

Belongs to the inositol 1,4,5-trisphosphate 5-phosphatase type II family. In terms of processing, phosphorylated on Ser/Thr residues. In terms of tissue distribution, expressed in heart, brain, kidney, stomach, small intestine and lung. Not expressed in spleen, thymus, skeletal muscle, testis and skin.

Its subcellular location is the cytoplasm. The enzyme catalyses 1D-myo-inositol 1,4,5-trisphosphate + H2O = 1D-myo-inositol 1,4-bisphosphate + phosphate. The catalysed reaction is 1D-myo-inositol 1,3,4,5-tetrakisphosphate + H2O = 1D-myo-inositol 1,3,4-trisphosphate + phosphate. It carries out the reaction a 1,2-diacyl-sn-glycero-3-phospho-(1D-myo-inositol-4,5-bisphosphate) + H2O = a 1,2-diacyl-sn-glycero-3-phospho-(1D-myo-inositol 4-phosphate) + phosphate. Inositol 5-phosphatase, which converts inositol 1,4,5-trisphosphate to inositol 1,4-bisphosphate. Also converts phosphatidylinositol 4,5-bisphosphate to phosphatidylinositol 4-phosphate and inositol 1,3,4,5-tetrakisphosphate to inositol 1,3,4-trisphosphate in vitro. May be involved in modulation of the function of inositol and phosphatidylinositol polyphosphate-binding proteins that are present at membranes ruffles. The sequence is that of Phosphatidylinositol 4,5-bisphosphate 5-phosphatase A (Inpp5j) from Rattus norvegicus (Rat).